A 92-amino-acid chain; its full sequence is Small ribosomal subunit protein uS19 (92 aa).

This sequence belongs to the universal ribosomal protein uS19 family.

Functionally, protein S19 forms a complex with S13 that binds strongly to the 16S ribosomal RNA. This is Small ribosomal subunit protein uS19 from Rhodopseudomonas palustris (strain BisB5).